The following is a 617-amino-acid chain: KIF-binding protein (617 aa).

The disordered stretch occupies residues 48–83 (ALLGPAPEDDDERAADDGPVDQALGAGEPRDAEGPG). Serine 174 is subject to Phosphoserine.

It belongs to the KIF-binding protein family. Interacts with KIF1B; positively regulates KIF1B microtubule motor activity. Interacts with STMN2.

It localises to the cytoplasm. Its subcellular location is the cytoskeleton. Its function is as follows. Activator of KIF1B plus-end-directed microtubule motor activity. Required for organization of axonal microtubules, and axonal outgrowth and maintenance during peripheral and central nervous system development. This chain is KIF-binding protein (Kifbp), found in Rattus norvegicus (Rat).